Reading from the N-terminus, the 394-residue chain is Elongation factor Tu (394 aa).

The 195-residue stretch at 10-204 (KPHLNVGTIG…ALDTYIPLPE (195 aa)) folds into the tr-type G domain. Positions 19–26 (GHVDHGKT) are G1. 19–26 (GHVDHGKT) contacts GTP. A Mg(2+)-binding site is contributed by T26. A G2 region spans residues 60-64 (GITIN). The segment at 81-84 (DCPG) is G3. GTP-binding positions include 81–85 (DCPGH) and 136–139 (NKCD). Positions 136–139 (NKCD) are G4. Positions 174–176 (SAL) are G5.

This sequence belongs to the TRAFAC class translation factor GTPase superfamily. Classic translation factor GTPase family. EF-Tu/EF-1A subfamily. In terms of assembly, monomer.

It is found in the cytoplasm. It catalyses the reaction GTP + H2O = GDP + phosphate + H(+). Functionally, GTP hydrolase that promotes the GTP-dependent binding of aminoacyl-tRNA to the A-site of ribosomes during protein biosynthesis. The sequence is that of Elongation factor Tu from Psychromonas ingrahamii (strain DSM 17664 / CCUG 51855 / 37).